A 162-amino-acid chain; its full sequence is uncharacterized protein (162 aa).

An N-terminal signal peptide occupies residues 1-24; sequence MCKRFKFLLAVSALFISITVVLAG. Cys25 carries the N-palmitoyl cysteine lipid modification. The S-diacylglycerol cysteine moiety is linked to residue Cys25.

Its subcellular location is the cell membrane. This is an uncharacterized protein from Bacillus anthracis.